A 97-amino-acid polypeptide reads, in one-letter code: YcgL domain-containing protein PSPPH_1548 (97 aa).

A YcgL domain is found at 3-87; the sequence is RICSIYRSPK…AEDDYIEHLP (85 aa).

The sequence is that of YcgL domain-containing protein PSPPH_1548 from Pseudomonas savastanoi pv. phaseolicola (strain 1448A / Race 6) (Pseudomonas syringae pv. phaseolicola (strain 1448A / Race 6)).